The primary structure comprises 765 residues: Probable ATP-dependent RNA helicase DDX27 (765 aa).

A phosphoserine mark is found at Ser-23, Ser-25, and Ser-48. The span at 43 to 63 (LGKNRSADFNPDFVFTEKEGT) shows a compositional bias: acidic residues. 2 disordered regions span residues 43-83 (LGKN…KRAA) and 111-179 (KEKE…FFED). A Required for interaction with the PEBOW complex motif is present at residues 55 to 57 (FVF). Over residues 129–156 (ENDEEGSEDEASETDYSSADENILTKAD) the composition is skewed to basic and acidic residues. Residues Ser-135 and Ser-146 each carry the phosphoserine modification. Positions 157–172 (TLKVKDRKKKKKKGQE) are enriched in acidic residues. Residues 164–169 (KKKKKK) carry the Nuclear localization signal motif. The Q motif motif lies at 187–215 (LSFQDMNLSRPLLKAITAMGFKQPTPIQK). Residues 218–392 (IPVGLLGKDI…SVSLKNPVRI (175 aa)) enclose the Helicase ATP-binding domain. 231 to 238 (AATGTGKT) serves as a coordination point for ATP. The short motif at 340 to 343 (DEAD) is the DEAD box element. A Helicase C-terminal domain is found at 426 to 572 (LLTRTFTDHV…DVILKFRDKI (147 aa)). Basic residues predominate over residues 716 to 725 (VFDEELTNTS).

Belongs to the DEAD box helicase family. DDX27/DRS1 subfamily. Associates with PeBoW complex, composed of BOP1, PES1 and WDR12. Interacts directly with BOP1 and PES1.

It is found in the nucleus. Its subcellular location is the nucleolus. It localises to the chromosome. It carries out the reaction ATP + H2O = ADP + phosphate + H(+). Functionally, probable ATP-dependent RNA helicase. Component of the nucleolar ribosomal RNA (rRNA) processing machinery that regulates 3' end formation of ribosomal 47S rRNA. The chain is Probable ATP-dependent RNA helicase DDX27 (DDX27) from Homo sapiens (Human).